Reading from the N-terminus, the 271-residue chain is Cyanophycinase (271 aa).

Active-site charge relay system residues include Ser-132, His-174, and Glu-201.

This sequence belongs to the peptidase S51 family. Homodimer.

The enzyme catalyses [L-4-(L-arginin-2-N-yl)aspartate](n) + H2O = [L-4-(L-arginin-2-N-yl)aspartate](n-1) + L-4-(L-arginin-2-N-yl)aspartate. Functionally, exopeptidase that catalyzes the hydrolytic cleavage of multi-L-arginyl-poly-L-aspartic acid (cyanophycin; a water-insoluble reserve polymer) into aspartate-arginine dipeptides. The sequence is that of Cyanophycinase (cphB) from Synechocystis sp. (strain ATCC 27184 / PCC 6803 / Kazusa).